We begin with the raw amino-acid sequence, 505 residues long: Glutamate--tRNA ligase (505 aa).

The 'HIGH' region signature appears at 11–21; the sequence is PSPTGPLHIGG. Residues 260–264 carry the 'KMSKS' region motif; sequence KLSKR. Lysine 263 lines the ATP pocket.

Belongs to the class-I aminoacyl-tRNA synthetase family. Glutamate--tRNA ligase type 1 subfamily. As to quaternary structure, monomer.

The protein localises to the cytoplasm. The catalysed reaction is tRNA(Glu) + L-glutamate + ATP = L-glutamyl-tRNA(Glu) + AMP + diphosphate. Its function is as follows. Catalyzes the attachment of glutamate to tRNA(Glu) in a two-step reaction: glutamate is first activated by ATP to form Glu-AMP and then transferred to the acceptor end of tRNA(Glu). The protein is Glutamate--tRNA ligase of Christiangramia forsetii (strain DSM 17595 / CGMCC 1.15422 / KT0803) (Gramella forsetii).